The chain runs to 303 residues: UDP-3-O-acyl-N-acetylglucosamine deacetylase (303 aa).

Residues histidine 78, histidine 237, and aspartate 241 each contribute to the Zn(2+) site. Catalysis depends on histidine 264, which acts as the Proton donor.

It belongs to the LpxC family. Zn(2+) is required as a cofactor.

It carries out the reaction a UDP-3-O-[(3R)-3-hydroxyacyl]-N-acetyl-alpha-D-glucosamine + H2O = a UDP-3-O-[(3R)-3-hydroxyacyl]-alpha-D-glucosamine + acetate. Its pathway is glycolipid biosynthesis; lipid IV(A) biosynthesis; lipid IV(A) from (3R)-3-hydroxytetradecanoyl-[acyl-carrier-protein] and UDP-N-acetyl-alpha-D-glucosamine: step 2/6. In terms of biological role, catalyzes the hydrolysis of UDP-3-O-myristoyl-N-acetylglucosamine to form UDP-3-O-myristoylglucosamine and acetate, the committed step in lipid A biosynthesis. The polypeptide is UDP-3-O-acyl-N-acetylglucosamine deacetylase (Xanthomonas campestris pv. campestris (strain 8004)).